The chain runs to 364 residues: Dihydroorotate dehydrogenase (quinone) (364 aa).

FMN contacts are provided by residues 62 to 66 (AGFDK) and Thr86. Residue Lys66 participates in substrate binding. Substrate is bound at residue 111-115 (NRMGF). The FMN site is built by Asn142 and Asn175. Asn175 lines the substrate pocket. Ser178 functions as the Nucleophile in the catalytic mechanism. Asn180 is a substrate binding site. FMN is bound by residues Lys216 and Thr244. 245–246 (NT) serves as a coordination point for substrate. FMN-binding positions include Gly267, Gly296, and 317 to 318 (YT).

The protein belongs to the dihydroorotate dehydrogenase family. Type 2 subfamily. In terms of assembly, monomer. Requires FMN as cofactor.

The protein localises to the cell membrane. The enzyme catalyses (S)-dihydroorotate + a quinone = orotate + a quinol. Its pathway is pyrimidine metabolism; UMP biosynthesis via de novo pathway; orotate from (S)-dihydroorotate (quinone route): step 1/1. In terms of biological role, catalyzes the conversion of dihydroorotate to orotate with quinone as electron acceptor. The protein is Dihydroorotate dehydrogenase (quinone) of Anaeromyxobacter dehalogenans (strain 2CP-1 / ATCC BAA-258).